The chain runs to 199 residues: Large ribosomal subunit protein bL9 (199 aa).

Residues T169–A199 form a disordered region.

It belongs to the bacterial ribosomal protein bL9 family.

Its function is as follows. Binds to the 23S rRNA. This chain is Large ribosomal subunit protein bL9, found in Novosphingobium aromaticivorans (strain ATCC 700278 / DSM 12444 / CCUG 56034 / CIP 105152 / NBRC 16084 / F199).